A 356-amino-acid chain; its full sequence is Protein-L-isoaspartate O-methyltransferase domain-containing protein 1 (356 aa).

The N-myristoyl glycine moiety is linked to residue glycine 2. Serine 64 is an active-site residue. 3 adoMet binding motif regions span residues 85-94 (LNLGSGTGYL), 160-164 (YDRIY), and 181-191 (LKVGGILVMPI). A BC-box region spans residues 240-250 (VRNLQDLARIY). Residues 299–331 (PLDSEEDEKMEEDKEEEEKEPGEALKPEEPPQN) form a disordered region. Residues 301–318 (DSEEDEKMEEDKEEEEKE) are compositionally biased toward acidic residues. Positions 319–331 (PGEALKPEEPPQN) are enriched in basic and acidic residues. Positions 340-343 (LPLP) are CUL-box.

The protein belongs to the methyltransferase superfamily. L-isoaspartyl/D-aspartyl protein methyltransferase family. Component of the probable ECS(PCMTD1) E3 ubiquitin-protein ligase complex, at least composed of CUL5, ELOB, ELOC, RBX2 and PCMTD1. Interacts (via the BC-box) with ELOB and ELOC; the interaction is direct and stabilizes PCMTD1.

The protein localises to the cytoplasm. Its subcellular location is the membrane. In terms of biological role, substrate recognition component of an ECS (Elongin BC-CUL5-SOCS-box protein) E3 ubiquitin ligase complex which mediates the ubiquitination and subsequent proteasomal degradation of target proteins. Specifically binds to the methyltransferase cofactor S-adenosylmethionine (AdoMet) via the N-terminal AdoMet binding motif, but does not display methyltransferase activity. May provide an alternate maintenance pathway for modified proteins by acting as a damage-specific E3 ubiquitin ligase adaptor protein. In Bos taurus (Bovine), this protein is Protein-L-isoaspartate O-methyltransferase domain-containing protein 1 (PCMTD1).